The chain runs to 211 residues: Cytidylate kinase (211 aa).

An ATP-binding site is contributed by 7-15 (GPAASGKGT).

It belongs to the cytidylate kinase family. Type 1 subfamily.

Its subcellular location is the cytoplasm. It catalyses the reaction CMP + ATP = CDP + ADP. It carries out the reaction dCMP + ATP = dCDP + ADP. The chain is Cytidylate kinase from Rhodopseudomonas palustris (strain BisA53).